The following is a 308-amino-acid chain: Probable manganese-dependent inorganic pyrophosphatase (308 aa).

Residues H9, D13, D15, D75, H97, and D149 each coordinate Mn(2+).

It belongs to the PPase class C family. It depends on Mn(2+) as a cofactor.

It is found in the cytoplasm. It catalyses the reaction diphosphate + H2O = 2 phosphate + H(+). The protein is Probable manganese-dependent inorganic pyrophosphatase of Listeria innocua serovar 6a (strain ATCC BAA-680 / CLIP 11262).